Consider the following 360-residue polypeptide: Membrane-bound lytic murein transglycosylase C (360 aa).

Positions 1–16 are cleaved as a signal peptide; sequence MKKLLALAVIAPLLIS. A lipid anchor (N-palmitoyl cysteine) is attached at cysteine 17. Cysteine 17 carries the S-diacylglycerol cysteine lipid modification.

Belongs to the transglycosylase Slt family.

Its subcellular location is the cell outer membrane. It carries out the reaction Exolytic cleavage of the (1-&gt;4)-beta-glycosidic linkage between N-acetylmuramic acid (MurNAc) and N-acetylglucosamine (GlcNAc) residues in peptidoglycan, from either the reducing or the non-reducing ends of the peptidoglycan chains, with concomitant formation of a 1,6-anhydrobond in the MurNAc residue.. Its function is as follows. Murein-degrading enzyme. May play a role in recycling of muropeptides during cell elongation and/or cell division. The polypeptide is Membrane-bound lytic murein transglycosylase C (Salmonella paratyphi A (strain ATCC 9150 / SARB42)).